The primary structure comprises 118 residues: Holo-[acyl-carrier-protein] synthase (118 aa).

Mg(2+) contacts are provided by Asp-8 and Glu-58.

It belongs to the P-Pant transferase superfamily. AcpS family. The cofactor is Mg(2+).

The protein resides in the cytoplasm. It carries out the reaction apo-[ACP] + CoA = holo-[ACP] + adenosine 3',5'-bisphosphate + H(+). Its function is as follows. Transfers the 4'-phosphopantetheine moiety from coenzyme A to a Ser of acyl-carrier-protein. In Streptococcus uberis (strain ATCC BAA-854 / 0140J), this protein is Holo-[acyl-carrier-protein] synthase.